The sequence spans 396 residues: Tryptophan synthase beta chain (396 aa).

Lysine 88 bears the N6-(pyridoxal phosphate)lysine mark.

This sequence belongs to the TrpB family. Tetramer of two alpha and two beta chains. It depends on pyridoxal 5'-phosphate as a cofactor.

The enzyme catalyses (1S,2R)-1-C-(indol-3-yl)glycerol 3-phosphate + L-serine = D-glyceraldehyde 3-phosphate + L-tryptophan + H2O. Its pathway is amino-acid biosynthesis; L-tryptophan biosynthesis; L-tryptophan from chorismate: step 5/5. The beta subunit is responsible for the synthesis of L-tryptophan from indole and L-serine. The protein is Tryptophan synthase beta chain of Actinobacillus pleuropneumoniae serotype 3 (strain JL03).